Consider the following 167-residue polypeptide: Probable chorismate pyruvate-lyase (167 aa).

Substrate is bound by residues R71, I110, and E150.

It belongs to the UbiC family.

It localises to the cytoplasm. The enzyme catalyses chorismate = 4-hydroxybenzoate + pyruvate. The protein operates within cofactor biosynthesis; ubiquinone biosynthesis. Its function is as follows. Removes the pyruvyl group from chorismate, with concomitant aromatization of the ring, to provide 4-hydroxybenzoate (4HB) for the ubiquinone pathway. This Acinetobacter baylyi (strain ATCC 33305 / BD413 / ADP1) protein is Probable chorismate pyruvate-lyase.